Reading from the N-terminus, the 282-residue chain is UDP-3-O-acyl-N-acetylglucosamine deacetylase (282 aa).

Zn(2+)-binding residues include H81, H239, and D243. H266 acts as the Proton donor in catalysis.

Belongs to the LpxC family. Zn(2+) serves as cofactor.

It catalyses the reaction a UDP-3-O-[(3R)-3-hydroxyacyl]-N-acetyl-alpha-D-glucosamine + H2O = a UDP-3-O-[(3R)-3-hydroxyacyl]-alpha-D-glucosamine + acetate. It participates in glycolipid biosynthesis; lipid IV(A) biosynthesis; lipid IV(A) from (3R)-3-hydroxytetradecanoyl-[acyl-carrier-protein] and UDP-N-acetyl-alpha-D-glucosamine: step 2/6. Functionally, catalyzes the hydrolysis of UDP-3-O-myristoyl-N-acetylglucosamine to form UDP-3-O-myristoylglucosamine and acetate, the committed step in lipid A biosynthesis. This chain is UDP-3-O-acyl-N-acetylglucosamine deacetylase, found in Chlamydia pneumoniae (Chlamydophila pneumoniae).